Reading from the N-terminus, the 293-residue chain is 4-hydroxy-tetrahydrodipicolinate synthase (293 aa).

Residue Thr-45 coordinates pyruvate. The Proton donor/acceptor role is filled by Tyr-133. The Schiff-base intermediate with substrate role is filled by Lys-161. Ile-203 lines the pyruvate pocket.

The protein belongs to the DapA family. As to quaternary structure, homotetramer; dimer of dimers.

It is found in the cytoplasm. It catalyses the reaction L-aspartate 4-semialdehyde + pyruvate = (2S,4S)-4-hydroxy-2,3,4,5-tetrahydrodipicolinate + H2O + H(+). The protein operates within amino-acid biosynthesis; L-lysine biosynthesis via DAP pathway; (S)-tetrahydrodipicolinate from L-aspartate: step 3/4. In terms of biological role, catalyzes the condensation of (S)-aspartate-beta-semialdehyde [(S)-ASA] and pyruvate to 4-hydroxy-tetrahydrodipicolinate (HTPA). In Shewanella denitrificans (strain OS217 / ATCC BAA-1090 / DSM 15013), this protein is 4-hydroxy-tetrahydrodipicolinate synthase.